A 240-amino-acid polypeptide reads, in one-letter code: Aldehyde dehydrogenase, cytosolic 2 (240 aa).

Active-site residues include Glu-8 and Cys-42. N6-acetyllysine occurs at positions 106, 149, 151, and 174.

This sequence belongs to the aldehyde dehydrogenase family. In terms of assembly, homotetramer. As to expression, non-lens specific, predominant form expressed in the liver.

The protein localises to the cytoplasm. It carries out the reaction an aldehyde + NAD(+) + H2O = a carboxylate + NADH + 2 H(+). Its pathway is alcohol metabolism; ethanol degradation; acetate from ethanol: step 2/2. Elephant shrews, in contrast to other mammals, possess both a lens- and a non-lens specific class-1 aldehyde dehydrogenase. Can convert/oxidize retinaldehyde to retinoic acid. This is Aldehyde dehydrogenase, cytosolic 2 from Macroscelides proboscideus (Short-eared elephant shrew).